A 420-amino-acid polypeptide reads, in one-letter code: UDP-N-acetylglucosamine 1-carboxyvinyltransferase (420 aa).

22–23 (KN) is a phosphoenolpyruvate binding site. Arg-92 contacts UDP-N-acetyl-alpha-D-glucosamine. Cys-116 functions as the Proton donor in the catalytic mechanism. A 2-(S-cysteinyl)pyruvic acid O-phosphothioketal modification is found at Cys-116. Residues 121 to 125 (RPVDL), 161 to 164 (KVSV), Asp-306, and Ile-328 contribute to the UDP-N-acetyl-alpha-D-glucosamine site.

This sequence belongs to the EPSP synthase family. MurA subfamily.

Its subcellular location is the cytoplasm. The enzyme catalyses phosphoenolpyruvate + UDP-N-acetyl-alpha-D-glucosamine = UDP-N-acetyl-3-O-(1-carboxyvinyl)-alpha-D-glucosamine + phosphate. Its pathway is cell wall biogenesis; peptidoglycan biosynthesis. Its function is as follows. Cell wall formation. Adds enolpyruvyl to UDP-N-acetylglucosamine. In Yersinia pseudotuberculosis serotype O:1b (strain IP 31758), this protein is UDP-N-acetylglucosamine 1-carboxyvinyltransferase.